A 200-amino-acid chain; its full sequence is Mediator of RNA polymerase II transcription subunit 29 (200 aa).

Low complexity-rich tracts occupy residues 1-21 (MAASQQQASAASSAAGVSGPS) and 36-48 (AQLVGPAQSGLLQ). Residues 1 to 48 (MAASQQQASAASSAAGVSGPSSAGGPGPQQQPQPPAQLVGPAQSGLLQ) are disordered. Alanine 2 carries the post-translational modification N-acetylalanine.

This sequence belongs to the Mediator complex subunit 29 family. Component of the Mediator complex, which is composed of MED1, MED4, MED6, MED7, MED8, MED9, MED10, MED11, MED12, MED13, MED13L, MED14, MED15, MED16, MED17, MED18, MED19, MED20, MED21, MED22, MED23, MED24, MED25, MED26, MED27, MED29, MED30, MED31, CCNC, CDK8 and CDC2L6/CDK11. The MED12, MED13, CCNC and CDK8 subunits form a distinct module termed the CDK8 module. Mediator containing the CDK8 module is less active than Mediator lacking this module in supporting transcriptional activation. Individual preparations of the Mediator complex lacking one or more distinct subunits have been variously termed ARC, CRSP, DRIP, PC2, SMCC and TRAP. Associates with the MED18/MED20 heteromer.

The protein localises to the nucleus. Its function is as follows. Component of the Mediator complex, a coactivator involved in the regulated transcription of nearly all RNA polymerase II-dependent genes. Mediator functions as a bridge to convey information from gene-specific regulatory proteins to the basal RNA polymerase II transcription machinery. Mediator is recruited to promoters by direct interactions with regulatory proteins and serves as a scaffold for the assembly of a functional preinitiation complex with RNA polymerase II and the general transcription factors. The protein is Mediator of RNA polymerase II transcription subunit 29 (MED29) of Pongo abelii (Sumatran orangutan).